The primary structure comprises 273 residues: Large ribosomal subunit protein uL2cz/uL2cy (273 aa).

Disordered regions lie at residues 1-24 (MAIHLYKTSTPSTRKGAVDSQAKS) and 224-254 (NPVDHPHGGGEGRAPIGRKKPTTPWGYPALG).

This sequence belongs to the universal ribosomal protein uL2 family. Part of the 50S ribosomal subunit.

The protein resides in the plastid. It is found in the chloroplast. The sequence is that of Large ribosomal subunit protein uL2cz/uL2cy (rpl2-A) from Nymphaea alba (White water-lily).